The sequence spans 331 residues: Anthranilate phosphoribosyltransferase (331 aa).

5-phospho-alpha-D-ribose 1-diphosphate-binding positions include G78, G81–D82, S86, N88–T91, K106–S114, and S118. G78 provides a ligand contact to anthranilate. S90 is a Mg(2+) binding site. An anthranilate-binding site is contributed by N109. R163 lines the anthranilate pocket. Residues D222 and E223 each coordinate Mg(2+).

This sequence belongs to the anthranilate phosphoribosyltransferase family. As to quaternary structure, homodimer. Mg(2+) serves as cofactor.

The catalysed reaction is N-(5-phospho-beta-D-ribosyl)anthranilate + diphosphate = 5-phospho-alpha-D-ribose 1-diphosphate + anthranilate. Its pathway is amino-acid biosynthesis; L-tryptophan biosynthesis; L-tryptophan from chorismate: step 2/5. Catalyzes the transfer of the phosphoribosyl group of 5-phosphorylribose-1-pyrophosphate (PRPP) to anthranilate to yield N-(5'-phosphoribosyl)-anthranilate (PRA). The protein is Anthranilate phosphoribosyltransferase of Staphylococcus epidermidis (strain ATCC 35984 / DSM 28319 / BCRC 17069 / CCUG 31568 / BM 3577 / RP62A).